The sequence spans 396 residues: Probable 20S rRNA accumulation protein 4 (396 aa).

It belongs to the TSR4 family.

The protein localises to the cytoplasm. Its subcellular location is the nucleus. It is found in the nucleolus. In terms of biological role, required for processing of the 20S pre-rRNA at site D to generate mature 18S rRNA. In Schizosaccharomyces pombe (strain 972 / ATCC 24843) (Fission yeast), this protein is Probable 20S rRNA accumulation protein 4.